The following is a 65-amino-acid chain: Large ribosomal subunit protein bL33c (65 aa).

Belongs to the bacterial ribosomal protein bL33 family.

Its subcellular location is the plastid. This is Large ribosomal subunit protein bL33c from Aneura mirabilis (Parasitic liverwort).